Here is a 426-residue protein sequence, read N- to C-terminus: Protein EARLY STARVATION 1, chloroplastic (426 aa).

A chloroplast-targeting transit peptide spans 1–58; that stretch reads MSEMAASSAISLLDIKLRRFGVGASNHELRLTKWFKGDQAGAPTRRFTCFADMLAPIR. 2 disordered regions span residues 106–127 and 396–426; these read CTPR…TGIA and QPRE…DQPQ. Over residues 118–127 the composition is skewed to basic and acidic residues; that stretch reads TPPKRDTGIA. The span at 412-426 shows a compositional bias: pro residues; sequence PSPPPEPDLPPDQPQ.

It belongs to the ESV1 family.

Its subcellular location is the plastid. It localises to the chloroplast stroma. The protein resides in the plastid stroma. In terms of biological role, binds preferentially to highly ordered alpha-glucans, such as starch and crystalline maltodextrins. Involved in the organization of the starch granule matrix, thus influencing starch turnover by modulating the accessibility of starch polymers to modifying and degrading enzymes involved in phosphorylation, hydrolyzes and synthesis, including starch synthases (SSI and SSIII), starch phosphorylases (PHS1), isoamylase, beta-amylase, glucan water dikinase (GWD) and phosphoglucan water dikinase (PWD). Prevents GWD- and PWD-mediated starch phosphorylation, and subsequent degradation. Required for the control of starch degradation in leaves and starch distribution in nonphotosynthetic parts (e.g. cells immediately adjacent to veins, columella cells of root caps, stems, flowers and siliques) by limiting the hasty depletion of starch reserves during the night. Promotes gravitropic responses, negative in shoots but positive in roots, by maintaining starch granules (statoliths) accumulation in hypocotyls and roots columella, especially in dark conditions and in the endodermis, where starch is formed from transported glucose-6-phosphates. The protein is Protein EARLY STARVATION 1, chloroplastic of Arabidopsis thaliana (Mouse-ear cress).